Reading from the N-terminus, the 95-residue chain is MLKSNNASETAARKVGDKTAKKVFFRRRKGCPLSVPHAPVIDYKNPELLIKFVSEGGRMLPSRITNVCAKKQRKLNNAVKIARILALLPFVFQAK.

This sequence belongs to the bacterial ribosomal protein bS18 family. Part of the 30S ribosomal subunit. Forms a tight heterodimer with protein bS6.

Binds as a heterodimer with protein bS6 to the central domain of the 16S rRNA, where it helps stabilize the platform of the 30S subunit. This Rickettsia massiliae (strain Mtu5) protein is Small ribosomal subunit protein bS18.